The sequence spans 266 residues: Prolactin-7A1 (266 aa).

The N-terminal stretch at M1–C30 is a signal peptide. N-linked (GlcNAc...) asparagine glycans are attached at residues N36, N58, N110, N149, and N157. 2 cysteine pairs are disulfide-bonded: C114–C231 and C248–C257.

It belongs to the somatotropin/prolactin family. As to expression, expressed specifically in the placenta. Detected only in the trophoblast giant cells.

It localises to the secreted. This Mus musculus (Mouse) protein is Prolactin-7A1 (Prl7a1).